The chain runs to 432 residues: Argininosuccinate lyase (432 aa).

The protein belongs to the lyase 1 family. Argininosuccinate lyase subfamily.

It is found in the cytoplasm. The enzyme catalyses 2-(N(omega)-L-arginino)succinate = fumarate + L-arginine. Its pathway is amino-acid biosynthesis; L-arginine biosynthesis; L-arginine from L-ornithine and carbamoyl phosphate: step 3/3. The polypeptide is Argininosuccinate lyase (Xanthomonas euvesicatoria pv. vesicatoria (strain 85-10) (Xanthomonas campestris pv. vesicatoria)).